The sequence spans 699 residues: SPS-sensor serine protease component SSY5 (699 aa).

2 disordered regions span residues Met1 to Phe113 and Val129 to Arg158. The propeptide occupies Met1–Ala381. Basic and acidic residues predominate over residues Asn8–Thr18. Over residues Asn24–Gly38 the composition is skewed to polar residues. Over residues Asn39–Asn51 the composition is skewed to basic and acidic residues. A compositionally biased stretch (low complexity) spans Ser61–Arg78. Polar residues predominate over residues Thr83–Glu93. Low complexity predominate over residues Ser144 to Ser154. The serine protease stretch occupies residues Phe459 to Gly699. Active-site charge relay system residues include His465, Asp545, and Ser640.

Belongs to the peptidase S64 family. As to quaternary structure, component of the plasma membrane SPS (SSY1-PTR3-SSY5) amino acid sensor complex. Post-translationally, the propeptide is autoproteolytically cleaved from the catalytic domain but remains associated, forming an inactive protease complex. This processing occurs even in the absence of signaling.

It is found in the cell membrane. Functionally, protease component of the SPS-sensor system, which regulates the expression of several amino acid-metabolizing enzymes and amino acid- and peptide-permeases in response to extracellular amino acid levels by controlling the activity of two transcription factors, STP1 and STP2. Catalyzes the activation of these transcription factors, which are synthesized as latent cytoplasmic precursors, by proteolytic removal of an N-terminal inhibitory domain containing cytoplasmic retention motifs. SSY5 binds as an inactive protease complex to STP1. In response to extracellular amino acids and dependent on the other SPS-sensor components, the inhibitory propeptide is induced to dissociate, and thereby enables the catalytic domain to process STP1. This chain is SPS-sensor serine protease component SSY5 (SSY5), found in Saccharomyces cerevisiae (strain AWRI1631) (Baker's yeast).